The following is a 180-amino-acid chain: Large ribosomal subunit protein uL6 (180 aa).

This sequence belongs to the universal ribosomal protein uL6 family. In terms of assembly, part of the 50S ribosomal subunit.

This protein binds to the 23S rRNA, and is important in its secondary structure. It is located near the subunit interface in the base of the L7/L12 stalk, and near the tRNA binding site of the peptidyltransferase center. The chain is Large ribosomal subunit protein uL6 from Anaeromyxobacter dehalogenans (strain 2CP-C).